The following is a 330-amino-acid chain: Phosphate acyltransferase (330 aa).

The protein belongs to the PlsX family. As to quaternary structure, homodimer. Probably interacts with PlsY.

The protein resides in the cytoplasm. It carries out the reaction a fatty acyl-[ACP] + phosphate = an acyl phosphate + holo-[ACP]. It functions in the pathway lipid metabolism; phospholipid metabolism. Functionally, catalyzes the reversible formation of acyl-phosphate (acyl-PO(4)) from acyl-[acyl-carrier-protein] (acyl-ACP). This enzyme utilizes acyl-ACP as fatty acyl donor, but not acyl-CoA. The polypeptide is Phosphate acyltransferase (Bacillus cereus (strain AH820)).